The sequence spans 500 residues: Probable cytosol aminopeptidase (500 aa).

Residues Lys-265 and Asp-270 each contribute to the Mn(2+) site. Residue Lys-277 is part of the active site. Residues Asp-288, Asp-347, and Glu-349 each contribute to the Mn(2+) site. The active site involves Arg-351.

Belongs to the peptidase M17 family. Mn(2+) is required as a cofactor.

It is found in the cytoplasm. It catalyses the reaction Release of an N-terminal amino acid, Xaa-|-Yaa-, in which Xaa is preferably Leu, but may be other amino acids including Pro although not Arg or Lys, and Yaa may be Pro. Amino acid amides and methyl esters are also readily hydrolyzed, but rates on arylamides are exceedingly low.. The catalysed reaction is Release of an N-terminal amino acid, preferentially leucine, but not glutamic or aspartic acids.. Functionally, presumably involved in the processing and regular turnover of intracellular proteins. Catalyzes the removal of unsubstituted N-terminal amino acids from various peptides. In Bdellovibrio bacteriovorus (strain ATCC 15356 / DSM 50701 / NCIMB 9529 / HD100), this protein is Probable cytosol aminopeptidase.